The chain runs to 209 residues: Large ribosomal subunit protein uL4 (209 aa).

Residues R45–A78 are disordered.

Belongs to the universal ribosomal protein uL4 family. In terms of assembly, part of the 50S ribosomal subunit.

Functionally, one of the primary rRNA binding proteins, this protein initially binds near the 5'-end of the 23S rRNA. It is important during the early stages of 50S assembly. It makes multiple contacts with different domains of the 23S rRNA in the assembled 50S subunit and ribosome. Forms part of the polypeptide exit tunnel. The polypeptide is Large ribosomal subunit protein uL4 (Flavobacterium psychrophilum (strain ATCC 49511 / DSM 21280 / CIP 103535 / JIP02/86)).